The primary structure comprises 194 residues: ATP-dependent Clp protease proteolytic subunit (194 aa).

Ser-97 (nucleophile) is an active-site residue. His-122 is an active-site residue.

It belongs to the peptidase S14 family. Fourteen ClpP subunits assemble into 2 heptameric rings which stack back to back to give a disk-like structure with a central cavity, resembling the structure of eukaryotic proteasomes.

The protein resides in the cytoplasm. It carries out the reaction Hydrolysis of proteins to small peptides in the presence of ATP and magnesium. alpha-casein is the usual test substrate. In the absence of ATP, only oligopeptides shorter than five residues are hydrolyzed (such as succinyl-Leu-Tyr-|-NHMec, and Leu-Tyr-Leu-|-Tyr-Trp, in which cleavage of the -Tyr-|-Leu- and -Tyr-|-Trp bonds also occurs).. Cleaves peptides in various proteins in a process that requires ATP hydrolysis. Has a chymotrypsin-like activity. Plays a major role in the degradation of misfolded proteins. The protein is ATP-dependent Clp protease proteolytic subunit of Thermus thermophilus (strain ATCC BAA-163 / DSM 7039 / HB27).